The following is a 302-amino-acid chain: Cell division protein FtsQ (302 aa).

A disordered region spans residues 1–41; sequence MPAVVRGGPPKPRRPRAEAPASPSKGKPAPRKAQPAAKLHA. At 1–50 the chain is on the cytoplasmic side; the sequence is MPAVVRGGPPKPRRPRAEAPASPSKGKPAPRKAQPAAKLHAARGVGLSPT. Residues 18–38 are compositionally biased toward low complexity; the sequence is EAPASPSKGKPAPRKAQPAAK. A helical membrane pass occupies residues 51–71; it reads VALSVAGAALGLGLVVMLATG. The Periplasmic portion of the chain corresponds to 72–302; sequence HRAERLGASM…LPGQPAADGA (231 aa). One can recognise a POTRA domain in the interval 94–162; the sequence is FRLKTVHIRG…DTVLIAVEER (69 aa).

Belongs to the FtsQ/DivIB family. FtsQ subfamily.

It is found in the cell inner membrane. Functionally, essential cell division protein. In Caulobacter vibrioides (strain ATCC 19089 / CIP 103742 / CB 15) (Caulobacter crescentus), this protein is Cell division protein FtsQ.